The following is a 55-amino-acid chain: Small ribosomal subunit protein eS31 (55 aa).

Positions 21, 24, 39, and 42 each coordinate Zn(2+). The segment at 21 to 42 (CPRCGPGVFLAEHADRFTCGRC) adopts a C4-type zinc-finger fold.

Belongs to the eukaryotic ribosomal protein eS31 family. As to quaternary structure, part of the 30S ribosomal subunit. The cofactor is Zn(2+).

The chain is Small ribosomal subunit protein eS31 from Thermoplasma volcanium (strain ATCC 51530 / DSM 4299 / JCM 9571 / NBRC 15438 / GSS1).